The sequence spans 311 residues: Pyrimidine-specific ribonucleoside hydrolase RihA (311 aa).

H240 is a catalytic residue.

This sequence belongs to the IUNH family. RihA subfamily.

In terms of biological role, hydrolyzes cytidine or uridine to ribose and cytosine or uracil, respectively. The sequence is that of Pyrimidine-specific ribonucleoside hydrolase RihA from Salmonella newport (strain SL254).